Consider the following 790-residue polypeptide: Protein sel-1 homolog 1 (790 aa).

The N-terminal stretch at 1 to 21 (MQVRVRLSLLLLCAVLLGSAA) is a signal peptide. Residues 22–51 (ATSDDKTNQDDSLDSKSSLPTDESVKDHTT) form a disordered region. Over 22 to 734 (ATSDDKTNQD…LFTQLDMDQL (713 aa)) the chain is Lumenal. The segment at 23-733 (TSDDKTNQDD…DLFTQLDMDQ (711 aa)) is interaction with ERLEC1, OS9 and SYVN1. The residue at position 64 (S64) is a Phosphoserine. Over residues 67-78 (AEVESLLQDEED) the composition is skewed to acidic residues. The segment at 67-98 (AEVESLLQDEEDSSKTQEEEISFLESPNPSSK) is disordered. In terms of domain architecture, Fibronectin type-II spans 118–166 (AHGEPCHFPFLFLDKEYDECTSDGREDGRLWCATTYDYKTDEKWGFCET). Cystine bridges form between C123–C149 and C137–C164. Sel1-like repeat units follow at residues 179-214 (AEMIYQAGMKILNGSNRKSQKREAYRYLQKAAGMNH), 215-250 (TKALERVSYALLFGDYLTQNIQAAKEMFEKLTEEGS), 251-286 (PKGQTGLGFLYASGLGVNSSQAKALVYYTFGALGGN), 287-322 (LIAHMILGYRYWAGIGVLQSCESALTHYRLVANHVA), 369-405 (VQAQVGLGQLHLHGGRGVEQNHQRAFDYFNLAANAGN), 406-442 (SHAMAFLGKMYSEGSDIVPQSNETALHYFKKAADMGN), 443-478 (PVGQSGLGMAYLYGRGVQVNYDLALKYFQKAAEQGW), 479-514 (VDGQLQLGSMYYNGIGVKRDYKQALKYFNLASQGGH), and 515-550 (ILAFYNLAQMHASGTGVMRSCHTAVELFKNVCERGR). 2 N-linked (GlcNAc...) asparagine glycosylation sites follow: N191 and N213. N268 is a glycosylation site (N-linked (GlcNAc...) asparagine). An important for homodimerization and oligomerization region spans residues 348–533 (NSGMLEEDLI…MHASGTGVMR (186 aa)). Residue N427 is glycosylated (N-linked (GlcNAc...) asparagine). The N-linked (GlcNAc...) asparagine glycan is linked to N604. Sel1-like repeat units follow at residues 623–658 (TVARIKLGDYHFYGFGTDVDYETAFIHYRLASEQQH) and 660–695 (AQAMFNLGYMHEKGLGIKQDIHLAKRFYDMAAEASP). The tract at residues 639–719 (TDVDYETAFI…VVYFLQYIRE (81 aa)) is interaction with SYVN1. The tract at residues 734 to 790 (LLGPEWDLYLMTIIALLLGTVIAYRQRQHQDIPVPRPPGPRPAPPQQEGPPEQQPPQ) is mediates retention in the endoplasmic reticulum. Residues 735 to 755 (LGPEWDLYLMTIIALLLGTVI) traverse the membrane as a helical segment. Residues 756 to 790 (AYRQRQHQDIPVPRPPGPRPAPPQQEGPPEQQPPQ) lie on the Cytoplasmic side of the membrane. The interval 763–790 (QDIPVPRPPGPRPAPPQQEGPPEQQPPQ) is disordered. The segment covering 767–790 (VPRPPGPRPAPPQQEGPPEQQPPQ) has biased composition (pro residues).

Belongs to the sel-1 family. As to quaternary structure, homodimer and homooligomer. May form a complex with ERLEC1, HSPA5, OS9, and SYVN1. Interacts with FOXRED2 and EDEM1. Interacts with LPL and LMF1; may stabilize the complex formed by LPL and LMF1 and thereby promote the export of LPL dimers. Component of the HRD1 complex, which comprises at least SYNV1/HRD1, DERL1/2, FAM8A1, HERPUD1/HERP, OS9, SEL1L and UBE2J1. SYNV1 assembles with SEL1L and FAM8A1 through its transmembrane domains, but interaction with its cytoplasmic domain is required to confer stability to FAM8A1 and enhance recruitment of HERPUD1. The interaction with SYNV1/HRD1 is direct. In terms of processing, N-glycosylated. Highly expressed in pancreas, white adipose tissue, liver and spleen (at protein level). Detected in heart, brain, spleen, lung, liver, kidney and testis.

The protein localises to the endoplasmic reticulum membrane. Its function is as follows. Plays a role in the endoplasmic reticulum quality control (ERQC) system also called ER-associated degradation (ERAD) involved in ubiquitin-dependent degradation of misfolded endoplasmic reticulum proteins. Enhances SYVN1 stability. Plays a role in LPL maturation and secretion. Required for normal differentiation of the pancreas epithelium, and for normal exocrine function and survival of pancreatic cells. May play a role in Notch signaling. This chain is Protein sel-1 homolog 1 (Sel1l), found in Mus musculus (Mouse).